A 355-amino-acid polypeptide reads, in one-letter code: UDP-N-acetylglucosamine--N-acetylmuramyl-(pentapeptide) pyrophosphoryl-undecaprenol N-acetylglucosamine transferase (355 aa).

UDP-N-acetyl-alpha-D-glucosamine contacts are provided by residues 15 to 17 (TGG), Asn127, Arg163, Ser191, Ile244, 263 to 268 (ALTVSE), and Gln288.

The protein belongs to the glycosyltransferase 28 family. MurG subfamily.

It is found in the cell inner membrane. It carries out the reaction di-trans,octa-cis-undecaprenyl diphospho-N-acetyl-alpha-D-muramoyl-L-alanyl-D-glutamyl-meso-2,6-diaminopimeloyl-D-alanyl-D-alanine + UDP-N-acetyl-alpha-D-glucosamine = di-trans,octa-cis-undecaprenyl diphospho-[N-acetyl-alpha-D-glucosaminyl-(1-&gt;4)]-N-acetyl-alpha-D-muramoyl-L-alanyl-D-glutamyl-meso-2,6-diaminopimeloyl-D-alanyl-D-alanine + UDP + H(+). It functions in the pathway cell wall biogenesis; peptidoglycan biosynthesis. In terms of biological role, cell wall formation. Catalyzes the transfer of a GlcNAc subunit on undecaprenyl-pyrophosphoryl-MurNAc-pentapeptide (lipid intermediate I) to form undecaprenyl-pyrophosphoryl-MurNAc-(pentapeptide)GlcNAc (lipid intermediate II). This Escherichia coli O9:H4 (strain HS) protein is UDP-N-acetylglucosamine--N-acetylmuramyl-(pentapeptide) pyrophosphoryl-undecaprenol N-acetylglucosamine transferase.